The primary structure comprises 167 residues: Biotin carboxyl carrier protein of acetyl-CoA carboxylase (167 aa).

Residues 53–91 are disordered; that stretch reads SGFSQERPIPTDPKKDTIKETTTENSETSTTTSSGDFIS. The span at 64–74 shows a compositional bias: basic and acidic residues; it reads DPKKDTIKETT. The segment covering 75 to 86 has biased composition (low complexity); it reads TENSETSTTTSS. The Biotinyl-binding domain maps to 87 to 163; the sequence is GDFISSPLVG…QFGSKLFRIA (77 aa). Residue lysine 129 is modified to N6-biotinyllysine.

As to quaternary structure, homodimer.

Its pathway is lipid metabolism; fatty acid biosynthesis. This protein is a component of the acetyl coenzyme A carboxylase complex; first, biotin carboxylase catalyzes the carboxylation of the carrier protein and then the transcarboxylase transfers the carboxyl group to form malonyl-CoA. The protein is Biotin carboxyl carrier protein of acetyl-CoA carboxylase (accB) of Chlamydia pneumoniae (Chlamydophila pneumoniae).